Reading from the N-terminus, the 182-residue chain is UPF0149 protein PM1723 (182 aa).

It belongs to the UPF0149 family.

This chain is UPF0149 protein PM1723, found in Pasteurella multocida (strain Pm70).